A 320-amino-acid chain; its full sequence is Olfactory receptor 51E2 (320 aa).

The Extracellular segment spans residues 1 to 24 (MSSCNFTHATFMLIGIPGLEEAHF). N-linked (GlcNAc...) asparagine glycosylation occurs at N5. A helical membrane pass occupies residues 25-45 (WFGFPLLSMYAVALFGNCIVV). At 46 to 53 (FIVRTERS) the chain is on the cytoplasmic side. Residues 54 to 74 (LHAPMYLFLCMLAAIDLALST) traverse the membrane as a helical segment. At 75 to 98 (STMPKILALFWFDSREITFDACLA) the chain is on the extracellular side. C96 and C178 are oxidised to a cystine. The chain crosses the membrane as a helical span at residues 99 to 119 (QMFFIHALSAIESTILLAMAF). At 120–138 (DRYVAICHPLRHAAVLNNT) the chain is on the cytoplasmic side. The helical transmembrane segment at 139–159 (VTVQIGMVALVRGSLFFFPLP) threads the bilayer. Over 160-195 (LLIKRLAFCHSNVLSHSYCVHQDVMKLAYTDTLPNV) the chain is Extracellular. Residues 196-216 (VYGLTAILLVMGVDVMFISLS) form a helical membrane-spanning segment. The Cytoplasmic portion of the chain corresponds to 217–236 (YFLIIRAVLQLPSKSERAKA). A helical transmembrane segment spans residues 237–257 (FGTCVSHIGVVLAFYVPLIGL). The Extracellular portion of the chain corresponds to 258–272 (SVVHRFGNSLDPIVH). Residues 273-293 (VLMGDVYLLLPPVINPIIYGA) form a helical membrane-spanning segment. The Cytoplasmic segment spans residues 294 to 320 (KTKQIRTRVLAMFKISCDKDIEAGGNT).

This sequence belongs to the G-protein coupled receptor 1 family. In terms of tissue distribution, expressed in brain and liver. Expressed only in some areas of the brain and in the olfactory epithelium.

Its subcellular location is the cell membrane. The protein localises to the early endosome membrane. Functionally, olfactory receptor. The activity of this receptor is probably mediated by G-proteins which induce elevation of intracellular Ca(2+), cAMP and activation of phosphorylation of the protein kinases PKA and MAPK3/MAPK1. Activation of OR51E2 may affect melanocyte proliferation, differentiation, and melanogenesis and may increase proliferation and migration of primary retinal pigment epithelial (RPE) cells. Activated by the short chain fatty acids (SCFA), acetate and propionate. In response to SCFA, may positively regulate renin secretion and increase blood pressure. May also be activated by steroid hormones and regulate cell proliferation. Activated by L-lactate in glomus cells. The sequence is that of Olfactory receptor 51E2 (Or51e2) from Rattus norvegicus (Rat).